The primary structure comprises 367 residues: Glutamate 5-kinase (367 aa).

Lys-9 serves as a coordination point for ATP. Residues Ser-49, Asp-136, and Asn-148 each coordinate substrate. Residues 168–169 (TD) and 210–216 (TGGMKSK) each bind ATP. A PUA domain is found at 276–350 (SGQIEVDAGA…GMQSQDIQVR (75 aa)).

Belongs to the glutamate 5-kinase family.

Its subcellular location is the cytoplasm. It catalyses the reaction L-glutamate + ATP = L-glutamyl 5-phosphate + ADP. It participates in amino-acid biosynthesis; L-proline biosynthesis; L-glutamate 5-semialdehyde from L-glutamate: step 1/2. In terms of biological role, catalyzes the transfer of a phosphate group to glutamate to form L-glutamate 5-phosphate. The protein is Glutamate 5-kinase of Bacillus cereus (strain G9842).